Reading from the N-terminus, the 64-residue chain is uncharacterized protein (64 aa).

This is an uncharacterized protein from Archaeoglobus fulgidus (strain ATCC 49558 / DSM 4304 / JCM 9628 / NBRC 100126 / VC-16).